Reading from the N-terminus, the 1230-residue chain is Potassium channel subfamily T member 1 (1230 aa).

The segment at 1 to 37 (MARAKLPRSPSEGKAGPGGAPAGAAAPEEPHGLSPLL) is disordered. Over 1-93 (MARAKLPRSP…LFFIKNQRSS (93 aa)) the chain is Cytoplasmic. Residues 94 to 126 (LRIRLFNFSLKLLTCLLYIVRVLLDDPALGIGC) traverse the membrane as a helical segment. Residues 127–153 (WGCPKQNYSFNDSSSEINWAPILWVER) are Extracellular-facing. N-linked (GlcNAc...) asparagine glycosylation is found at Asn-133 and Asn-137. Residues 154–178 (KMTLWAIQVIVAIISFLETMLLIYL) form a helical membrane-spanning segment. Residues 179–192 (SYKGNIWEQIFRVS) are Cytoplasmic-facing. A helical membrane pass occupies residues 193-208 (FVLEMINTLPFIITIF). Topologically, residues 209-215 (WPPLRNL) are extracellular. A helical membrane pass occupies residues 216–233 (FIPVFLNCWLAKHALENM). Residues 234–246 (INDFHRAILRTQS) are Cytoplasmic-facing. The chain crosses the membrane as a helical span at residues 247 to 274 (AMFNQVLILFCTLLCLVFTGTCGIQHLE). The Extracellular portion of the chain corresponds to 275–281 (RAGENLS). The pore-forming intramembrane region spans 282-302 (LLTSFYFCIVTFSTVGYGDVT). Positions 296 and 297 each coordinate K(+). The Extracellular segment spans residues 303-304 (PK). A helical membrane pass occupies residues 305–338 (IWPSQLLVVIMICVALVVLPLQFEELVYLWMERQ). The Cytoplasmic segment spans residues 339 to 1230 (KSGGNYSRHR…NPETRDETQL (892 aa)). An RCK N-terminal 1 domain is found at 352 to 488 (EKHVVLCVSS…FHVKFADHVV (137 aa)). The Na(+) site is built by Leu-513, His-516, Ser-538, and Asn-540. The tract at residues 660-689 (TEHRPTQSGGGGGGSKLALPTENGSGSRRP) is disordered. Residues Cys-758 and Cys-759 each contribute to the Zn(2+) site. Residues Arg-761 and Lys-764 each coordinate K(+). Na(+) contacts are provided by Arg-761 and Lys-764. 2 residues coordinate Zn(2+): Cys-766 and His-768. K(+) contacts are provided by Asn-769, Tyr-771, Tyr-777, and Gly-778. Tyr-771 lines the Na(+) pocket. Phe-779 contributes to the Na(+) binding site. The region spanning 781–921 (NKLIIVSAET…QFRAKDSYSL (141 aa)) is the RCK N-terminal 2 domain. Residues Ser-787, Leu-818, Asp-820, Gly-842, and Asp-865 each contribute to the K(+) site. 2 disordered regions span residues 1048–1078 (EVKG…EHPL) and 1204–1230 (SSSQ…ETQL). Gly residues predominate over residues 1057-1072 (AGTGGSSQGRHTGGGD). Positions 1204–1219 (SSSQSRKSSCSHKLSS) are enriched in low complexity.

It belongs to the potassium channel family. Calcium-activated (TC 1.A.1.3) subfamily. KCa4.1/KCNT1 sub-subfamily. In terms of assembly, homotetramer; which constitutes the Na(+)-activated K(+) channel. Interacts with KCNT2; these heterodimer channels differ from the homomers in their unitary conductance, kinetic behavior, subcellular localization, and response to activation of protein kinase C. Interacts (via C-terminus) with FMR1; this interaction alters gating properties of KCNT1. Interacts with CRBN via its cytoplasmic C-terminus. Phosphorylated by protein kinase C. Phosphorylation of the C-terminal domain increases channel activity. In terms of tissue distribution, highest expression in liver, brain and spinal cord. Lowest expression in skeletal muscle.

Its subcellular location is the cell membrane. It carries out the reaction K(+)(in) = K(+)(out). Activated by high intracellular Na(+). In addition to activation by Na(+), is cooperatively activated by intracellular Cl(-) levels. Inhibited by Zn(2+). Activated upon stimulation of G-protein coupled receptors, such as CHRM1 and GRIA1. Functionally, sodium-activated K(+) channel. Acts as an important mediator of neuronal membrane excitability. Contributes to the delayed outward currents. Regulates neuronal bursting in sensory neurons. Contributes to synaptic development and plasticity. The polypeptide is Potassium channel subfamily T member 1 (Homo sapiens (Human)).